We begin with the raw amino-acid sequence, 162 residues long: Phosphopantetheine adenylyltransferase (162 aa).

Ser-11 is a substrate binding site. ATP-binding positions include 11–12 (SF) and His-19. Substrate-binding residues include Lys-43, Leu-75, and Arg-89. ATP is bound by residues 90 to 92 (GLR), Glu-100, and 125 to 131 (YSYLSSS).

It belongs to the bacterial CoaD family. In terms of assembly, homohexamer. Requires Mg(2+) as cofactor.

Its subcellular location is the cytoplasm. It carries out the reaction (R)-4'-phosphopantetheine + ATP + H(+) = 3'-dephospho-CoA + diphosphate. It functions in the pathway cofactor biosynthesis; coenzyme A biosynthesis; CoA from (R)-pantothenate: step 4/5. Its function is as follows. Reversibly transfers an adenylyl group from ATP to 4'-phosphopantetheine, yielding dephospho-CoA (dPCoA) and pyrophosphate. The polypeptide is Phosphopantetheine adenylyltransferase (Geotalea uraniireducens (strain Rf4) (Geobacter uraniireducens)).